We begin with the raw amino-acid sequence, 431 residues long: Glutamate-1-semialdehyde 2,1-aminomutase (431 aa).

An N6-(pyridoxal phosphate)lysine modification is found at lysine 265.

Belongs to the class-III pyridoxal-phosphate-dependent aminotransferase family. HemL subfamily. Homodimer. Pyridoxal 5'-phosphate is required as a cofactor.

It localises to the cytoplasm. It carries out the reaction (S)-4-amino-5-oxopentanoate = 5-aminolevulinate. It participates in porphyrin-containing compound metabolism; protoporphyrin-IX biosynthesis; 5-aminolevulinate from L-glutamyl-tRNA(Glu): step 2/2. The chain is Glutamate-1-semialdehyde 2,1-aminomutase from Pseudoalteromonas atlantica (strain T6c / ATCC BAA-1087).